Here is a 191-residue protein sequence, read N- to C-terminus: Pyridoxal 5'-phosphate synthase subunit PdxT (191 aa).

46–48 (GES) contacts L-glutamine. Cys-78 (nucleophile) is an active-site residue. L-glutamine-binding positions include Arg-105 and 133–134 (IR). Catalysis depends on charge relay system residues His-169 and Glu-171.

This sequence belongs to the glutaminase PdxT/SNO family. In terms of assembly, in the presence of PdxS, forms a dodecamer of heterodimers. Only shows activity in the heterodimer.

It catalyses the reaction aldehydo-D-ribose 5-phosphate + D-glyceraldehyde 3-phosphate + L-glutamine = pyridoxal 5'-phosphate + L-glutamate + phosphate + 3 H2O + H(+). The catalysed reaction is L-glutamine + H2O = L-glutamate + NH4(+). It participates in cofactor biosynthesis; pyridoxal 5'-phosphate biosynthesis. Its function is as follows. Catalyzes the hydrolysis of glutamine to glutamate and ammonia as part of the biosynthesis of pyridoxal 5'-phosphate. The resulting ammonia molecule is channeled to the active site of PdxS. The polypeptide is Pyridoxal 5'-phosphate synthase subunit PdxT (Brevibacillus brevis (strain 47 / JCM 6285 / NBRC 100599)).